Consider the following 195-residue polypeptide: ATP-dependent Clp protease proteolytic subunit (195 aa).

Serine 97 serves as the catalytic Nucleophile. Residue histidine 122 is part of the active site.

Belongs to the peptidase S14 family. Fourteen ClpP subunits assemble into 2 heptameric rings which stack back to back to give a disk-like structure with a central cavity, resembling the structure of eukaryotic proteasomes.

The protein localises to the cytoplasm. It catalyses the reaction Hydrolysis of proteins to small peptides in the presence of ATP and magnesium. alpha-casein is the usual test substrate. In the absence of ATP, only oligopeptides shorter than five residues are hydrolyzed (such as succinyl-Leu-Tyr-|-NHMec, and Leu-Tyr-Leu-|-Tyr-Trp, in which cleavage of the -Tyr-|-Leu- and -Tyr-|-Trp bonds also occurs).. Its function is as follows. Cleaves peptides in various proteins in a process that requires ATP hydrolysis. Has a chymotrypsin-like activity. Plays a major role in the degradation of misfolded proteins. The chain is ATP-dependent Clp protease proteolytic subunit from Lactobacillus gasseri (strain ATCC 33323 / DSM 20243 / BCRC 14619 / CIP 102991 / JCM 1131 / KCTC 3163 / NCIMB 11718 / NCTC 13722 / AM63).